A 539-amino-acid chain; its full sequence is Probable malate:quinone oxidoreductase 3 (539 aa).

A disordered region spans residues Leu-516–Arg-539.

Belongs to the MQO family. It depends on FAD as a cofactor.

It carries out the reaction (S)-malate + a quinone = a quinol + oxaloacetate. It participates in carbohydrate metabolism; tricarboxylic acid cycle; oxaloacetate from (S)-malate (quinone route): step 1/1. The polypeptide is Probable malate:quinone oxidoreductase 3 (Pseudomonas putida (strain ATCC 47054 / DSM 6125 / CFBP 8728 / NCIMB 11950 / KT2440)).